The following is a 129-amino-acid chain: MTESDVDSGSKKYLSNHKGIFIHVTLEELKRYHQLTPEQKRLIRAIVKTLIHNPQLLDESSYLYRLLASKAISQFVCPLCLMPFSSSVSLKQHIRYTEHTKVCPVCKKEFTSTDSALDHVCKKHNICVS.

2 consecutive C2H2-type zinc fingers follow at residues Phe-75–His-99 and Lys-101–His-124.

Its function is as follows. Essential for virus function. This is an uncharacterized protein from Saccharolobus solfataricus (Sulfolobus solfataricus).